A 468-amino-acid polypeptide reads, in one-letter code: ERO1-like protein alpha (468 aa).

The signal sequence occupies residues Met1–Gly23. 8 disulfides stabilise this stretch: Cys35/Cys48, Cys37/Cys46, Cys85/Cys391, Cys94/Cys99, Cys94/Cys131, Cys99/Cys104, Cys208/Cys241, and Cys394/Cys397. A phosphoserine mark is found at Ser106, Ser143, and Ser145. Residues Arg187, Thr189, and Trp200 each contribute to the FAD site. Residues Ser252 and His255 each coordinate FAD. The N-linked (GlcNAc...) asparagine glycan is linked to Asn280. FAD contacts are provided by Arg287 and Arg300. The N-linked (GlcNAc...) asparagine glycan is linked to Asn384.

This sequence belongs to the EROs family. In terms of assembly, predominantly monomer. May function both as a monomer and a homodimer. Interacts with PDILT. Interacts with ERP44; the interaction results in retention of ERO1A in the endoplasmic reticulum. FAD serves as cofactor. Post-translationally, the Cys-94/Cys-99 and Cys-394/Cys-397 disulfide bonds constitute the redox-active center. The Cys-94/Cys-99 disulfide bond may accept electron from P4HB and funnel them to the active site disulfide Cys-394/Cys-397. The regulatory Cys-99/Cys-104 disulfide bond stabilizes the other regulatory bond Cys-94/Cys-131. In terms of processing, phosphorylated on Ser-145 by FAM20C in the Golgi which increases its enzymatic activity. Phosphorylation is induced by lactation. It is also induced by hypoxia and reductive stress.

Its subcellular location is the endoplasmic reticulum membrane. It is found in the golgi apparatus lumen. The protein resides in the secreted. The protein localises to the cell projection. It localises to the dendrite. Its activity is regulated as follows. Enzyme activity is tightly regulated to prevent the accumulation of reactive oxygen species in the endoplasmic reticulum. Reversibly down-regulated by the formation of disulfide bonds between the active site Cys-94 and Cys-131, and between Cys-99 and Cys-104. Glutathione may be required to regulate its activity in the endoplasmic reticulum. Its function is as follows. Oxidoreductase involved in disulfide bond formation in the endoplasmic reticulum. Efficiently reoxidizes P4HB/PDI, the enzyme catalyzing protein disulfide formation, in order to allow P4HB to sustain additional rounds of disulfide formation. Following P4HB reoxidation, passes its electrons to molecular oxygen via FAD, leading to the production of reactive oxygen species (ROS) in the cell. Required for the proper folding of immunoglobulins. Plays an important role in ER stress-induced, CHOP-dependent apoptosis by activating the inositol 1,4,5-trisphosphate receptor IP3R1. The protein is ERO1-like protein alpha of Sus scrofa (Pig).